The chain runs to 743 residues: Keratin, type I cytoskeletal 9 (743 aa).

Residues 1-16 (MSCRQSSSSFWSSSSS) are compositionally biased toward low complexity. The disordered stretch occupies residues 1–46 (MSCRQSSSSFWSSSSSCGGGGGRGGSGGSMRSSFSRSSRAGGGGGG). The interval 1–130 (MSCRQSSSSF…GGEGGILNTN (130 aa)) is head. Phosphoserine is present on residues serine 14 and serine 16. Positions 17–28 (CGGGGGRGGSGG) are enriched in gly residues. Residues 29–39 (SMRSSFSRSSR) show a composition bias toward low complexity. Phosphoserine occurs at positions 55 and 155. The segment at 131 to 166 (EKIVMQNLNSRLASYMEKVLELEESNTAMEKQIQDW) is coil 1A. Positions 131 to 443 (EKIVMQNLNS…ELLEGGQQDF (313 aa)) constitute an IF rod domain. A linker 1 region spans residues 167–185 (YSKRGPKVFQKDNTHYYDT). Residues 186–277 (IEDLKDRIVD…KNHKEEMSQL (92 aa)) form a coil 1B region. The linker 12 stretch occupies residues 278–300 (TGQNDGDVNVEINVAPSTDLTRV). The coil 2 stretch occupies residues 301–439 (LNDMREEYEQ…ETYRELLEGG (139 aa)). 2 disordered regions span residues 440–468 (QQDF…GSYG) and 501–743 (GGSG…KMRY). Positions 440 to 709 (QQDFESSGAG…GGGSGSGGGS (270 aa)) are tail. Gly residues-rich tracts occupy residues 449-468 (GQIG…GSYG) and 501-717 (GGSG…GGGN).

The protein belongs to the intermediate filament family. In terms of assembly, heterotetramer of two type I and two type II keratins. Expressed in footpad epidermis and testis (at protein level).

Functionally, may serve an important special function either in the mature palmar and plantar skin tissue or in the morphogenetic program of the formation of these tissues. Plays a role in keratin filament assembly. Plays an essential role in the correct development of sperm. This is Keratin, type I cytoskeletal 9 from Mus musculus (Mouse).